Here is a 459-residue protein sequence, read N- to C-terminus: ATP synthase subunit beta (459 aa).

Residue 148 to 155 (GGAGVGKT) coordinates ATP.

The protein belongs to the ATPase alpha/beta chains family. As to quaternary structure, F-type ATPases have 2 components, CF(1) - the catalytic core - and CF(0) - the membrane proton channel. CF(1) has five subunits: alpha(3), beta(3), gamma(1), delta(1), epsilon(1). CF(0) has three main subunits: a(1), b(2) and c(9-12). The alpha and beta chains form an alternating ring which encloses part of the gamma chain. CF(1) is attached to CF(0) by a central stalk formed by the gamma and epsilon chains, while a peripheral stalk is formed by the delta and b chains.

The protein localises to the cell inner membrane. It catalyses the reaction ATP + H2O + 4 H(+)(in) = ADP + phosphate + 5 H(+)(out). Produces ATP from ADP in the presence of a proton gradient across the membrane. The catalytic sites are hosted primarily by the beta subunits. In Vesicomyosocius okutanii subsp. Calyptogena okutanii (strain HA), this protein is ATP synthase subunit beta.